A 369-amino-acid chain; its full sequence is Glycolate oxidase 5 (369 aa).

The FMN hydroxy acid dehydrogenase domain maps to 1 to 360 (MGEITNVTEY…TRNHVITEAD (360 aa)). A glyoxylate-binding site is contributed by Tyr-25. Residues 78–80 (PSA), Ser-107, 128–130 (QLY), and Thr-156 each bind FMN. Residue Tyr-130 participates in glyoxylate binding. A glyoxylate-binding site is contributed by Arg-165. FMN contacts are provided by Lys-231 and Ser-253. Positions 255 and 258 each coordinate glyoxylate. The active-site Proton acceptor is His-255. FMN contacts are provided by residues 286-290 (DGGVR) and 309-310 (GR). The short motif at 367 to 369 (SRL) is the Microbody targeting signal element.

The protein belongs to the FMN-dependent alpha-hydroxy acid dehydrogenase family. Homotetramer. Requires FMN as cofactor.

It is found in the peroxisome. The catalysed reaction is glycolate + O2 = glyoxylate + H2O2. Its pathway is photosynthesis; photorespiration; glycine from 2-phosphoglycolate: step 2/3. Functionally, catalyzes the oxidation of glycolate to glyoxylate, with a reduction of O2 to H2O2. Is a key enzyme in photorespiration in green plants. This Oryza sativa subsp. japonica (Rice) protein is Glycolate oxidase 5 (GLO5).